The following is a 131-amino-acid chain: Small ribosomal subunit protein uS8 (131 aa).

This sequence belongs to the universal ribosomal protein uS8 family. As to quaternary structure, part of the 30S ribosomal subunit. Contacts proteins S5 and S12.

Its function is as follows. One of the primary rRNA binding proteins, it binds directly to 16S rRNA central domain where it helps coordinate assembly of the platform of the 30S subunit. This chain is Small ribosomal subunit protein uS8, found in Acidovorax sp. (strain JS42).